A 480-amino-acid chain; its full sequence is UDP-N-acetylmuramate--L-alanine ligase (480 aa).

An ATP-binding site is contributed by 129–135 (GTHGKTT).

The protein belongs to the MurCDEF family.

It localises to the cytoplasm. It carries out the reaction UDP-N-acetyl-alpha-D-muramate + L-alanine + ATP = UDP-N-acetyl-alpha-D-muramoyl-L-alanine + ADP + phosphate + H(+). Its pathway is cell wall biogenesis; peptidoglycan biosynthesis. Cell wall formation. The sequence is that of UDP-N-acetylmuramate--L-alanine ligase from Mannheimia succiniciproducens (strain KCTC 0769BP / MBEL55E).